A 478-amino-acid chain; its full sequence is Nuclear distribution protein PAC1 (478 aa).

Positions 9–41 (QAEELHKAMIAYLLSANLPKSAAALREELADSV) constitute a LisH domain. Residues 60-87 (TSVVRLQKKIMDLESRNNALQSELDSAT) are a coiled coil. WD repeat units lie at residues 113–154 (SHRE…RTIK), 156–196 (HTKA…KNIR), 200–247 (GHDH…CVKT), 250–289 (GHVDWVRDVVASPDGRFLFSAGNDQVARLWDVSSGETKST), 292–352 (GHEH…IKTL), 354–393 (GHDNWVRALAFHPGGKYLLSVSDDKTLRCWDLTQECKCVR), 398–439 (AHGH…GASA), and 440–477 (INGVVPTGKKEDPGGGPMMGIRCVIATGSVDLKVRVFA).

This sequence belongs to the WD repeat LIS1/nudF family. Self-associates. Interacts with NDL1 and dynein.

The protein localises to the cytoplasm. Its subcellular location is the cytoskeleton. The protein resides in the spindle pole. Positively regulates the activity of the minus-end directed microtubule motor protein dynein. May enhance dynein-mediated microtubule sliding by targeting dynein to the microtubule plus end. Required for nuclear migration during vegetative growth as well as development. Required for retrograde early endosome (EE) transport from the hyphal tip. Required for localization of dynein to the mitotic spindle poles. Recruits additional proteins to the dynein complex at SPBs. This chain is Nuclear distribution protein PAC1, found in Paracoccidioides brasiliensis (strain Pb03).